A 407-amino-acid polypeptide reads, in one-letter code: MPLNIIGTALLDGTDKIPYYQTIKKVAPYVLATGAIKYWSRGPSNTWERKLHGKVYLVTGATSQGMGTSVAYKMAELGAQLIILTREVDEWVTEWCEELREKTKNELIFVEKCDLSNLWEIRKFATSWLDNSPPRRLDGVIVMSGDMEPWGIPKISLPQRRSSKDGLELQIATNYVAIFHLLNLLQPSFKAQPPDRDVRIILATCWLQVVGDINIEDPLWQNAKYKSALKFFASSKLQLGLSMMELQRRLTEDIKNQKTNGAERTGKNVTITMVQPGTMRSNSLRRVISNGSVVLLIILYCILLYPILWLFTKSGRRGDQSFLYALMTPELEEVNLKDTKVKYISDCSIVKFARKEFDDEELQKKLFDNTERDILQLEKKVAAKRNANKTGNQNSKKKSQNKSRKDD.

Residues 1-290 are Lumenal-facing; the sequence is MPLNIIGTAL…SNSLRRVISN (290 aa). Residues aspartate 114, lysine 236, and serine 281 each coordinate NADP(+). Lysine 236 serves as the catalytic Lowers pKa of active site Tyr. The helical transmembrane segment at 291-311 threads the bilayer; it reads GSVVLLIILYCILLYPILWLF. Residues 312–407 are Cytoplasmic-facing; sequence TKSGRRGDQS…KSQNKSRKDD (96 aa). Residues 361–390 are a coiled coil; it reads ELQKKLFDNTERDILQLEKKVAAKRNANKT. Residues 383–407 form a disordered region; that stretch reads AKRNANKTGNQNSKKKSQNKSRKDD. The segment covering 395–407 has biased composition (basic residues); that stretch reads SKKKSQNKSRKDD.

This sequence belongs to the short-chain dehydrogenases/reductases (SDR) family.

Its subcellular location is the endoplasmic reticulum membrane. May be involved in lipid metabolism. This is an uncharacterized protein from Saccharomyces cerevisiae (strain ATCC 204508 / S288c) (Baker's yeast).